A 456-amino-acid polypeptide reads, in one-letter code: METIKKNEVKTGKVIDLTHEGHGVVKVDRYPIFIPNALIDEEIKFKLIKVKKNFAIGKLIEVISESDDRVTPPCIYYAKCGGCQLQHMTYRAQLDMKREQVVNLFHRKGPFENTVIKETIGMVNPWRYRNKSQIPVGQSNSNQVIMGFYRQRSHDIIDMDSCLIQDRQHQEVMNRVKYWLNELNISIYNEKTKTGLIRHLVVRTGYHTDEMMVIFVTNGATFKQSELLVNKLKKEFPNITSIKQNINNSHSNVIMGRQSMTLYGKDKIEDQLSEVTYHISDLSFYQINSSQTEKLYQQALNYAQLTGKEIVLDTYCGIGTIGLYMAPLAKHVYGVEVVPQAIKDAEDNATKNQLKNTTFECGKAEDVILTWKSQGIKPGVVMVDPPRKGCDETFLTTLLKLNPKRIVYISCNPSTQQRDAQILAEQYELVEITPVDMFPQTTHIETVALFVRKDEE.

One can recognise a TRAM domain in the interval 3 to 61 (TIKKNEVKTGKVIDLTHEGHGVVKVDRYPIFIPNALIDEEIKFKLIKVKKNFAIGKLIE). Positions 74, 80, 83, and 162 each coordinate [4Fe-4S] cluster. The S-adenosyl-L-methionine site is built by Gln286, Tyr315, Glu336, and Asp384. Cys411 acts as the Nucleophile in catalysis.

It belongs to the class I-like SAM-binding methyltransferase superfamily. RNA M5U methyltransferase family.

This is an uncharacterized protein from Staphylococcus epidermidis (strain ATCC 35984 / DSM 28319 / BCRC 17069 / CCUG 31568 / BM 3577 / RP62A).